Reading from the N-terminus, the 362-residue chain is Anthranilate phosphoribosyltransferase (362 aa).

Residues Gly-96, 99-100, Thr-104, 106-109, 124-132, and Gly-136 contribute to the 5-phospho-alpha-D-ribose 1-diphosphate site; these read GD, NIST, and KHGNRAASS. Residue Gly-96 coordinates anthranilate. Mg(2+) is bound at residue Ser-108. Anthranilate is bound at residue Asn-127. Residue Arg-182 participates in anthranilate binding. Asp-240 and Glu-241 together coordinate Mg(2+).

Belongs to the anthranilate phosphoribosyltransferase family. Homodimer. The cofactor is Mg(2+).

The catalysed reaction is N-(5-phospho-beta-D-ribosyl)anthranilate + diphosphate = 5-phospho-alpha-D-ribose 1-diphosphate + anthranilate. The protein operates within amino-acid biosynthesis; L-tryptophan biosynthesis; L-tryptophan from chorismate: step 2/5. Catalyzes the transfer of the phosphoribosyl group of 5-phosphorylribose-1-pyrophosphate (PRPP) to anthranilate to yield N-(5'-phosphoribosyl)-anthranilate (PRA). The polypeptide is Anthranilate phosphoribosyltransferase (Rhodococcus opacus (strain B4)).